A 251-amino-acid chain; its full sequence is Imidazole glycerol phosphate synthase subunit HisF (251 aa).

Active-site residues include D11 and D130.

This sequence belongs to the HisA/HisF family. As to quaternary structure, heterodimer of HisH and HisF.

It localises to the cytoplasm. It carries out the reaction 5-[(5-phospho-1-deoxy-D-ribulos-1-ylimino)methylamino]-1-(5-phospho-beta-D-ribosyl)imidazole-4-carboxamide + L-glutamine = D-erythro-1-(imidazol-4-yl)glycerol 3-phosphate + 5-amino-1-(5-phospho-beta-D-ribosyl)imidazole-4-carboxamide + L-glutamate + H(+). Its pathway is amino-acid biosynthesis; L-histidine biosynthesis; L-histidine from 5-phospho-alpha-D-ribose 1-diphosphate: step 5/9. IGPS catalyzes the conversion of PRFAR and glutamine to IGP, AICAR and glutamate. The HisF subunit catalyzes the cyclization activity that produces IGP and AICAR from PRFAR using the ammonia provided by the HisH subunit. In Chlorobaculum parvum (strain DSM 263 / NCIMB 8327) (Chlorobium vibrioforme subsp. thiosulfatophilum), this protein is Imidazole glycerol phosphate synthase subunit HisF.